The following is a 366-amino-acid chain: Peptide chain release factor 1 (366 aa).

Glutamine 239 carries the post-translational modification N5-methylglutamine.

It belongs to the prokaryotic/mitochondrial release factor family. Post-translationally, methylated by PrmC. Methylation increases the termination efficiency of RF1.

The protein localises to the cytoplasm. Peptide chain release factor 1 directs the termination of translation in response to the peptide chain termination codons UAG and UAA. The chain is Peptide chain release factor 1 from Baumannia cicadellinicola subsp. Homalodisca coagulata.